Here is a 173-residue protein sequence, read N- to C-terminus: Lens fiber membrane intrinsic protein (173 aa).

The Cytoplasmic segment spans residues 1-3; that stretch reads MYS. The chain crosses the membrane as a helical span at residues 4–24; it reads FMGGGLFCAWVGTILLVVATA. The Extracellular segment spans residues 25-66; sequence TDHWMQYRLSGAFAHQGLWRYCLGTKCYLQTESIAYWNATRA. Residues tryptophan 43 and tryptophan 61 are each glycosylated (C-linked (Man) tryptophan; partial). A helical membrane pass occupies residues 67-87; the sequence is FMILSSLCATSGIIMGIVAFA. The Cytoplasmic segment spans residues 88–98; that stretch reads QQPTFTRLSRP. The helical transmembrane segment at 99-119 threads the bilayer; the sequence is FSAGIMFFASTFFVLLALAIY. At 120–140 the chain is on the extracellular side; the sequence is TGVTVSFLGRRFGDWRFSWSY. A helical transmembrane segment spans residues 141-161; the sequence is ILGWVALLMTFFAGIFYMCAY. Residues 162-173 are Cytoplasmic-facing; that stretch reads RMHECRRLSTPR. A Phosphoserine modification is found at serine 170. Threonine 171 carries the post-translational modification Phosphothreonine.

It belongs to the PMP-22/EMP/MP20 family. In terms of assembly, seems to be associated with itself or another lens membrane component via disulfide bonds. Predominantly monophosphorylated on Ser-170. Only about 15% diphosphorylated on both Ser-170 and Thr-171. Post-translationally, C-glycosylated. Trp-43 is more extensively C-glycosylated than Trp-61. C-glycosylation may be involved in membrane trafficking. As to expression, eye lens specific.

It localises to the membrane. Its function is as follows. Present in the thicker 16-17 nm junctions of mammalian lens fiber cells, where it may contribute to cell junctional organization. Acts as a receptor for calmodulin. May play an important role in both lens development and cataractogenesis. This is Lens fiber membrane intrinsic protein (LIM2) from Bos taurus (Bovine).